Here is a 488-residue protein sequence, read N- to C-terminus: MSGEKQAEESIVVSGEDEVAGRKVEDSAAEEDIDGNGGNGFSMKSFLWHGGSAWDAWFSCASNQVAQVLLTLPYSFSQLGMLSGILLQIFYGLMGSWTAYLISVLYVEYRARMEKQEAKSFKNHVIQWFEVLDGLLGPYWKAAGLAFNCTFLLFGSVIQLIACASNIYYINDRLDKRTWTYIFGACCATTVFIPSFHNYRIWSFLGLGMTTYTAWYLTIASFLHGQAEGVTHSGPTKLVLYFTGATNILYTFGGHAVTVEIMHAMWKPRKFKSIYLMATLYVFTLTLPSASAVYWAFGDQLLNHSNAFSLLPKTRFRDTAVILMLIHQFITFGFACTPLYFVWEKAIGMHHTKSLCLRALVRLPVVVPIWFLAIIFPFFGPINSAVGALLVTFTVYIIPALAHMLTYRTASARRNAAEKPPFFIPSWAGVYVINAFIVVWVLVLGFGFGGWASMTNFIRQIDTFGLFAKCYQCKPPPAPIAAGAHHRR.

A disordered region spans residues 1-36 (MSGEKQAEESIVVSGEDEVAGRKVEDSAAEEDIDGN). Over 1–64 (MSGEKQAEES…DAWFSCASNQ (64 aa)) the chain is Cytoplasmic. Residues 65 to 82 (VAQVLLTLPYSFSQLGML) traverse the membrane as a helical segment. Residues 83 to 84 (SG) lie on the Extracellular side of the membrane. A helical transmembrane segment spans residues 85 to 105 (ILLQIFYGLMGSWTAYLISVL). Topologically, residues 106 to 141 (YVEYRARMEKQEAKSFKNHVIQWFEVLDGLLGPYWK) are cytoplasmic. The chain crosses the membrane as a helical span at residues 142–162 (AAGLAFNCTFLLFGSVIQLIA). Topologically, residues 163 to 178 (CASNIYYINDRLDKRT) are extracellular. The helical transmembrane segment at 179–199 (WTYIFGACCATTVFIPSFHNY) threads the bilayer. Topologically, residues 200–202 (RIW) are cytoplasmic. The helical transmembrane segment at 203–223 (SFLGLGMTTYTAWYLTIASFL) threads the bilayer. Over 224-238 (HGQAEGVTHSGPTKL) the chain is Extracellular. The helical transmembrane segment at 239 to 259 (VLYFTGATNILYTFGGHAVTV) threads the bilayer. The Cytoplasmic portion of the chain corresponds to 260–273 (EIMHAMWKPRKFKS). The chain crosses the membrane as a helical span at residues 274-294 (IYLMATLYVFTLTLPSASAVY). The Extracellular portion of the chain corresponds to 295–320 (WAFGDQLLNHSNAFSLLPKTRFRDTA). N-linked (GlcNAc...) asparagine glycosylation is present at asparagine 303. The chain crosses the membrane as a helical span at residues 321–341 (VILMLIHQFITFGFACTPLYF). The Cytoplasmic portion of the chain corresponds to 342–362 (VWEKAIGMHHTKSLCLRALVR). A helical membrane pass occupies residues 363 to 383 (LPVVVPIWFLAIIFPFFGPIN). Serine 384 is a topological domain (extracellular). Residues 385–405 (AVGALLVTFTVYIIPALAHML) traverse the membrane as a helical segment. The Cytoplasmic portion of the chain corresponds to 406 to 427 (TYRTASARRNAAEKPPFFIPSW). A helical membrane pass occupies residues 428–448 (AGVYVINAFIVVWVLVLGFGF). Topologically, residues 449 to 488 (GGWASMTNFIRQIDTFGLFAKCYQCKPPPAPIAAGAHHRR) are extracellular.

It belongs to the amino acid/polyamine transporter 2 family. Amino acid/auxin permease (AAAP) (TC 2.A.18.1) subfamily.

It is found in the cell membrane. In terms of biological role, carrier protein involved in proton-driven auxin influx. Mediates the formation of auxin gradient from developing leaves (site of auxin biosynthesis) to tips by contributing to the loading of auxin in vascular tissues and facilitating acropetal (base to tip) auxin transport within inner tissues of the root apex, and basipetal (tip to base) auxin transport within outer tissues of the root apex. The sequence is that of Auxin transporter-like protein 1 (LAX1) from Arabidopsis thaliana (Mouse-ear cress).